The chain runs to 264 residues: uncharacterized protein (264 aa).

6 consecutive transmembrane segments (helical) span residues 1–21 (MLLG…SVSL), 43–63 (FFGV…NGFV), 95–115 (VVGL…LSSL), 146–166 (IATW…LGGL), 181–201 (GWLA…QPFV), and 215–235 (IVAN…MFFP).

It to M.pneumoniae MPN_308 C-terminal region.

The protein localises to the cell membrane. This is an uncharacterized protein from Mycoplasma pneumoniae (strain ATCC 29342 / M129 / Subtype 1) (Mycoplasmoides pneumoniae).